The sequence spans 699 residues: Mannan-binding lectin serine protease 1 (699 aa).

An N-terminal signal peptide occupies residues 1–19 (MRWLLLYYALCFSLSKASA). The CUB 1 domain occupies 20–138 (HTVELNNMFG…TGFDAHYMAV (119 aa)). The interval 20–184 (HTVELNNMFG…HTDNRTCRVE (165 aa)) is homodimerization. The interaction with MBL2 stretch occupies residues 20–184 (HTVELNNMFG…HTDNRTCRVE (165 aa)). The segment at 20-278 (HTVELNNMFG…STQSHSVLIL (259 aa)) is interaction with FCN2. A glycan (N-linked (GlcNAc...) asparagine) is linked at asparagine 49. Residues glutamate 68, aspartate 76, aspartate 121, serine 123, aspartate 139, valine 140, and glutamate 142 each coordinate Ca(2+). Cysteine 73 and cysteine 91 are oxidised to a cystine. The EGF-like; calcium-binding domain maps to 139–182 (DVDECKEREDEELSCDHYCHNYIGGYYCSCRFGYILHTDNRTCR). Disulfide bonds link cysteine 143–cysteine 157, cysteine 153–cysteine 166, cysteine 168–cysteine 181, and cysteine 185–cysteine 212. Ca(2+) contacts are provided by asparagine 159, tyrosine 160, and glycine 163. The residue at position 159 (asparagine 159) is a (3R)-3-hydroxyasparagine. Residue asparagine 178 is glycosylated (N-linked (GlcNAc...) (complex) asparagine). In terms of domain architecture, CUB 2 spans 185–297 (CSDNLFTQRT…RGWRLSYRAA (113 aa)). Positions 235, 245, 282, and 284 each coordinate Ca(2+). A disulfide bridge connects residues cysteine 242 and cysteine 260. 2 Sushi domains span residues 299 to 364 (NECP…TCKI) and 365 to 434 (VDCR…TCLP). 6 cysteine pairs are disulfide-bonded: cysteine 301–cysteine 349, cysteine 329–cysteine 362, cysteine 367–cysteine 414, cysteine 397–cysteine 432, cysteine 436–cysteine 572, and cysteine 475–cysteine 491. Residue asparagine 385 is glycosylated (N-linked (GlcNAc...) (complex) asparagine). Asparagine 407 carries an N-linked (GlcNAc...) asparagine glycan. In terms of domain architecture, Peptidase S1 spans 449–696 (IFNGRPAQKG…NKDWIQRVTG (248 aa)). Histidine 490 acts as the Charge relay system in catalysis. Leucine 533 is a glycosylation site (N-linked (GlcNAc) asparagine). Catalysis depends on aspartate 552, which acts as the Charge relay system. The N-linked (GlcNAc) asparagine glycan is linked to glutamate 599. Cystine bridges form between cysteine 614/cysteine 631 and cysteine 642/cysteine 672. Residue serine 646 is the Charge relay system of the active site.

This sequence belongs to the peptidase S1 family. Homodimer. Interacts with the oligomeric lectins MBL2, FCN2 and FCN3; triggers the lectin pathway of complement through activation of C3. Interacts with SERPING1. Interacts with COLEC11; probably triggers the lectin pathway of complement. Post-translationally, the iron and 2-oxoglutarate dependent 3-hydroxylation of aspartate and asparagine is (R) stereospecific within EGF domains. N-glycosylated. Some N-linked glycan are of the complex-type. In terms of processing, autoproteolytic processing of the proenzyme produces the active enzyme composed on the heavy and the light chain held together by a disulfide bond. Isoform 1 but not isoform 2 is activated through autoproteolytic processing. As to expression, protein of the plasma which is primarily expressed by liver.

It localises to the secreted. Its activity is regulated as follows. Inhibited by SERPING1 and A2M. Functionally, functions in the lectin pathway of complement, which performs a key role in innate immunity by recognizing pathogens through patterns of sugar moieties and neutralizing them. The lectin pathway is triggered upon binding of mannan-binding lectin (MBL) and ficolins to sugar moieties which leads to activation of the associated proteases MASP1 and MASP2. Functions as an endopeptidase and may activate MASP2 or C2 or directly activate C3 the key component of complement reaction. Isoform 2 may have an inhibitory effect on the activation of the lectin pathway of complement or may cleave IGFBP5. Also plays a role in development. This chain is Mannan-binding lectin serine protease 1 (MASP1), found in Homo sapiens (Human).